A 269-amino-acid polypeptide reads, in one-letter code: MSIIKNNFEKMNITKIKNSKNNKKLTVITAYDALFAKLFEEIADMILVGDSLNMSFAGRPDTLSATLEQMIYHTNAVCNGAKNAFVIIDMPFGTYINKDEALKNCVEVYRQTNANAVKIEGGEDKADIIKHLTSNAVAVMGHIGLMPQYVRSEGGYKVRGKTKEDEEQLIRDAIAVEKAGAFSIVVEGVKSDVAKKITQAVNIPIIGIGAGVDTDGQVLVWSDMLGFFEEFKPKFVRHYLDGAELVKEAVNQYRNDVQDKSFPSKEEEY.

Positions 50 and 89 each coordinate Mg(2+). 3-methyl-2-oxobutanoate-binding positions include 50–51 (DS), D89, and K118. Mg(2+) is bound at residue E120. E187 serves as the catalytic Proton acceptor.

The protein belongs to the PanB family. In terms of assembly, homodecamer; pentamer of dimers. Mg(2+) serves as cofactor.

Its subcellular location is the cytoplasm. The catalysed reaction is 3-methyl-2-oxobutanoate + (6R)-5,10-methylene-5,6,7,8-tetrahydrofolate + H2O = 2-dehydropantoate + (6S)-5,6,7,8-tetrahydrofolate. Its pathway is cofactor biosynthesis; (R)-pantothenate biosynthesis; (R)-pantoate from 3-methyl-2-oxobutanoate: step 1/2. In terms of biological role, catalyzes the reversible reaction in which hydroxymethyl group from 5,10-methylenetetrahydrofolate is transferred onto alpha-ketoisovalerate to form ketopantoate. This is 3-methyl-2-oxobutanoate hydroxymethyltransferase from Aliarcobacter butzleri (strain RM4018) (Arcobacter butzleri).